We begin with the raw amino-acid sequence, 812 residues long: Mitochondrial intermediate peptidase (812 aa).

Residues 1-35 constitute a mitochondrion transit peptide; that stretch reads MLKLLRPRPWVCNSCLNRVAFPKPYPVGSRSTRWL. The disordered stretch occupies residues 518–544; it reads STSEGGPAFGSPESAANDGMAASRGAS. Residue histidine 587 participates in Zn(2+) binding. The active site involves glutamate 588. Residues histidine 591 and histidine 594 each coordinate Zn(2+).

Belongs to the peptidase M3 family. It depends on Zn(2+) as a cofactor.

It localises to the mitochondrion matrix. It carries out the reaction Release of an N-terminal octapeptide as second stage of processing of some proteins imported into the mitochondrion.. In terms of biological role, cleaves proteins, imported into the mitochondrion, to their mature size. While most mitochondrial precursor proteins are processed to the mature form in one step by mitochondrial processing peptidase (MPP), the sequential cleavage by MIP of an octapeptide after initial processing by MPP is a required step for a subgroup of nuclear-encoded precursor proteins destined for the matrix or the inner membrane. The polypeptide is Mitochondrial intermediate peptidase (OCT1) (Pyricularia oryzae (strain 70-15 / ATCC MYA-4617 / FGSC 8958) (Rice blast fungus)).